Here is a 224-residue protein sequence, read N- to C-terminus: COMM domain-containing protein 5 (224 aa).

Ser-2 is modified (N-acetylserine). The region spanning His-151 to Glu-215 is the COMM domain.

Belongs to the COMM domain-containing protein 5 family. In terms of assembly, component of the commander complex consisting of the CCC subcomplex and the retriever subcomplex. Component of the CCC (COMMD/CCDC22/CCDC93) subcomplex consisting of COMMD1, COMMD2, COMMD3, COMMD4, COMMD5, COMMD6, COMMD7, COMMD8, COMMD9, COMMD10, CCDC22 and CCDC93; within the complex forms a heterodimer with COMMD10. Interacts (via COMM domain) with COMMD1 (via COMM domain). Interacts with RELA, RELB, NFKB1/p105. Interacts with CCDC22, CCDC93, SCNN1B, CUL2, CUL3, CUL4A, CUL4B, CUL7. As to expression, highly expressed in heart, stomach, jejunum, kidney, liver, and adrenal gland. Expression was generally higher in adult organs than in fetal tissues, particularly in heart, kidney, and liver.

The protein localises to the cytoplasm. It is found in the nucleus. Its function is as follows. Scaffold protein in the commander complex that is essential for endosomal recycling of transmembrane cargos; the commander complex is composed of the CCC subcomplex and the retriever subcomplex. May modulate activity of cullin-RING E3 ubiquitin ligase (CRL) complexes. Negatively regulates cell proliferation. Negatively regulates cell cycle G2/M phase transition probably by transactivating p21/CDKN1A through the p53/TP53-independent signaling pathway. Involved in kidney proximal tubule morphogenesis. Down-regulates activation of NF-kappa-B. The chain is COMM domain-containing protein 5 (COMMD5) from Homo sapiens (Human).